The chain runs to 816 residues: Stemod-13(17)-ene synthase (816 aa).

Residues 1–10 (MMLLSSSYSG) show a composition bias toward polar residues. The segment at 1-24 (MMLLSSSYSGGQFPGVSPLGTRPK) is disordered. Aspartate 553, aspartate 557, asparagine 698, threonine 702, and glutamate 706 together coordinate Mg(2+). The short motif at 553 to 557 (DDFFD) is the DDXXD motif element.

Belongs to the terpene synthase family. Mg(2+) is required as a cofactor.

It catalyses the reaction 9alpha-copalyl diphosphate = stemod-13(17)-ene + diphosphate. Catalyzes the conversion of syn-copalyl diphosphate to stemodene. This chain is Stemod-13(17)-ene synthase (KSL11), found in Oryza sativa subsp. indica (Rice).